The sequence spans 283 residues: Thymidylate synthase (283 aa).

Arg22 is a binding site for dUMP. Cys160 acts as the Nucleophile in catalysis. Residues 180 to 183 (RSCD), Asn191, and 221 to 223 (HIY) each bind dUMP. Position 183 (Asp183) interacts with (6R)-5,10-methylene-5,6,7,8-tetrahydrofolate. Residue Ser282 participates in (6R)-5,10-methylene-5,6,7,8-tetrahydrofolate binding.

It belongs to the thymidylate synthase family. Bacterial-type ThyA subfamily. Homodimer.

It is found in the cytoplasm. The enzyme catalyses dUMP + (6R)-5,10-methylene-5,6,7,8-tetrahydrofolate = 7,8-dihydrofolate + dTMP. Its pathway is pyrimidine metabolism; dTTP biosynthesis. Catalyzes the reductive methylation of 2'-deoxyuridine-5'-monophosphate (dUMP) to 2'-deoxythymidine-5'-monophosphate (dTMP) while utilizing 5,10-methylenetetrahydrofolate (mTHF) as the methyl donor and reductant in the reaction, yielding dihydrofolate (DHF) as a by-product. This enzymatic reaction provides an intracellular de novo source of dTMP, an essential precursor for DNA biosynthesis. The protein is Thymidylate synthase of Actinobacillus succinogenes (strain ATCC 55618 / DSM 22257 / CCUG 43843 / 130Z).